We begin with the raw amino-acid sequence, 124 residues long: Insulin growth factor-like family member 4 (124 aa).

The first 19 residues, 1–19 (MVPRISAAIFIFELLGSNS), serve as a signal peptide directing secretion. Residues asparagine 57 and asparagine 84 are each glycosylated (N-linked (GlcNAc...) asparagine).

The protein belongs to the IGFL family. In terms of tissue distribution, detected in the cerebellum.

It localises to the secreted. This is Insulin growth factor-like family member 4 (IGFL4) from Homo sapiens (Human).